Consider the following 520-residue polypeptide: Cholesterol side-chain cleavage enzyme, mitochondrial (520 aa).

The transit peptide at 1-39 directs the protein to the mitochondrion; the sequence is MLARGLALRSVLVKGCQPFLSAPRECPGHPRVGTGEGAC. Heme is bound at residue Cys461.

The protein belongs to the cytochrome P450 family. As to quaternary structure, interacts with FDX1/adrenodoxin. Heme is required as a cofactor.

The protein localises to the mitochondrion inner membrane. The enzyme catalyses 6 reduced [adrenodoxin] + cholesterol + 3 O2 + 6 H(+) = 4-methylpentanal + pregnenolone + 6 oxidized [adrenodoxin] + 4 H2O. It catalyses the reaction 2 reduced [adrenodoxin] + cholesterol + O2 + 2 H(+) = (22R)-hydroxycholesterol + 2 oxidized [adrenodoxin] + H2O. It carries out the reaction (22R)-hydroxycholesterol + 2 reduced [adrenodoxin] + O2 + 2 H(+) = (20R,22R)-20,22-dihydroxycholesterol + 2 oxidized [adrenodoxin] + H2O. The catalysed reaction is (20R,22R)-20,22-dihydroxycholesterol + 2 reduced [adrenodoxin] + O2 + 2 H(+) = 4-methylpentanal + pregnenolone + 2 oxidized [adrenodoxin] + 2 H2O. It participates in lipid metabolism; C21-steroid hormone metabolism. It functions in the pathway steroid metabolism; cholesterol metabolism. Its function is as follows. A cytochrome P450 monooxygenase that catalyzes the side-chain hydroxylation and cleavage of cholesterol to pregnenolone, the precursor of most steroid hormones. Catalyzes three sequential oxidation reactions of cholesterol, namely the hydroxylation at C22 followed with the hydroxylation at C20 to yield 20R,22R-hydroxycholesterol that is further cleaved between C20 and C22 to yield the C21-steroid pregnenolone and 4-methylpentanal. Mechanistically, uses molecular oxygen inserting one oxygen atom into a substrate and reducing the second into a water molecule. Two electrons are provided by NADPH via a two-protein mitochondrial transfer system comprising flavoprotein FDXR (adrenodoxin/ferredoxin reductase) and nonheme iron-sulfur protein FDX1 or FDX2 (adrenodoxin/ferredoxin). The chain is Cholesterol side-chain cleavage enzyme, mitochondrial (CYP11A1) from Sus scrofa (Pig).